A 382-amino-acid polypeptide reads, in one-letter code: uncharacterized protein (382 aa).

The next 12 helical transmembrane spans lie at 14–34 (GLLL…LWLA), 45–65 (VVSS…GYVI), 79–99 (FIFA…SWLA), 102–122 (FVAG…LMCS), 131–151 (LLAA…LLVS), 157–177 (LMSV…PLLF), 204–224 (LGVN…GLMP), 235–255 (ASIG…QWPI), 270–290 (VQVF…AMAP), 291–311 (ALFI…AWAC), 325–345 (ALLL…AMLM), and 348–368 (FSDN…LLML).

Belongs to the major facilitator superfamily. YcaD (TC 2.A.1.26) family.

It localises to the cell inner membrane. This is an uncharacterized protein from Escherichia coli (strain K12 / MC4100 / BW2952).